The sequence spans 85 residues: Large ribosomal subunit protein bL27 (85 aa).

Residues 1–20 are disordered; the sequence is MAHKKAGGSTRNGRDSEAKR.

It belongs to the bacterial ribosomal protein bL27 family.

The sequence is that of Large ribosomal subunit protein bL27 from Proteus mirabilis (strain HI4320).